The chain runs to 456 residues: Amino acid transporter AVT6B (456 aa).

Transmembrane regions (helical) follow at residues 37–57 (FSGA…MALP), 58–78 (ATMK…MAFL), 118–138 (ILVS…DVLA), 164–184 (TFVL…FKRI), 191–211 (SAIS…ITII), 236–256 (LFTV…VHSI), 273–293 (ALAM…LLFG), 328–348 (LMLV…GLIF), 365–385 (SITA…PSIW), 388–408 (FQFT…AAVI), and 423–443 (IAIC…YSDA).

The protein belongs to the amino acid/polyamine transporter 2 family. Amino acid/auxin permease (AAAP) (TC 2.A.18.6) subfamily.

It localises to the membrane. This is Amino acid transporter AVT6B from Arabidopsis thaliana (Mouse-ear cress).